Reading from the N-terminus, the 452-residue chain is FAD transporter (452 aa).

12 helical membrane passes run 21–41 (LPNL…TFFI), 49–69 (LAAI…AIGV), 96–116 (ALLL…IFIE), 131–151 (LIHD…LLMV), 167–187 (MIMT…IFGI), 199–219 (AIAT…LLII), 248–270 (AALM…AHID), 283–303 (LESV…PFIA), 324–344 (FILV…QPLA), 357–377 (LSFY…VIIF), 392–412 (VINL…GSYI), and 417–437 (GLLL…YYLA).

It belongs to the multi antimicrobial extrusion (MATE) (TC 2.A.66.1) family.

It localises to the cell inner membrane. Flavin adenine dinucleotide (FAD) transporter that facilitates export of flavin electron shuttles. In Shewanella oneidensis (strain ATCC 700550 / JCM 31522 / CIP 106686 / LMG 19005 / NCIMB 14063 / MR-1), this protein is FAD transporter.